Here is a 315-residue protein sequence, read N- to C-terminus: ADP-L-glycero-D-manno-heptose-6-epimerase (315 aa).

NADP(+)-binding positions include 10–11 (FI), 31–32 (DD), lysine 38, lysine 53, 76–80 (QGACS), and asparagine 93. Tyrosine 140 serves as the catalytic Proton acceptor. Lysine 144 lines the NADP(+) pocket. Position 169 (asparagine 169) interacts with substrate. The NADP(+) site is built by valine 170 and lysine 178. Catalysis depends on lysine 178, which acts as the Proton acceptor. Substrate is bound by residues serine 180, histidine 187, 201 to 204 (FEGC), arginine 214, and tyrosine 278.

It belongs to the NAD(P)-dependent epimerase/dehydratase family. HldD subfamily. In terms of assembly, homopentamer. NADP(+) is required as a cofactor.

It carries out the reaction ADP-D-glycero-beta-D-manno-heptose = ADP-L-glycero-beta-D-manno-heptose. Its pathway is nucleotide-sugar biosynthesis; ADP-L-glycero-beta-D-manno-heptose biosynthesis; ADP-L-glycero-beta-D-manno-heptose from D-glycero-beta-D-manno-heptose 7-phosphate: step 4/4. Catalyzes the interconversion between ADP-D-glycero-beta-D-manno-heptose and ADP-L-glycero-beta-D-manno-heptose via an epimerization at carbon 6 of the heptose. In Syntrophotalea carbinolica (strain DSM 2380 / NBRC 103641 / GraBd1) (Pelobacter carbinolicus), this protein is ADP-L-glycero-D-manno-heptose-6-epimerase.